Reading from the N-terminus, the 231-residue chain is Dihydropteridine reductase (231 aa).

An NADP(+)-binding site is contributed by 6-30 (LVLGGSGALGAEVVKFFKSKSWNTI). The active-site Proton acceptor is Y138.

The protein belongs to the short-chain dehydrogenases/reductases (SDR) family. Homodimer.

The catalysed reaction is 5,6,7,8-tetrahydropteridine + NAD(+) = 6,7-dihydropteridine + NADH + H(+). The enzyme catalyses 5,6,7,8-tetrahydropteridine + NADP(+) = 6,7-dihydropteridine + NADPH + H(+). Functionally, the product of this enzyme, tetrahydrobiopterin (BH-4), is an essential cofactor for phenylalanine, tyrosine, and tryptophan hydroxylases. The sequence is that of Dihydropteridine reductase (qdpr) from Dictyostelium discoideum (Social amoeba).